A 92-amino-acid chain; its full sequence is C-C motif chemokine 4 (92 aa).

A signal peptide spans 1 to 23; it reads MKLCVSALSLLLLVAAFCAPGFS. Disulfide bonds link cysteine 34–cysteine 58 and cysteine 35–cysteine 74.

The protein belongs to the intercrine beta (chemokine CC) family. As to quaternary structure, homodimer.

The protein localises to the secreted. In terms of biological role, monokine with inflammatory and chemokinetic properties. This is C-C motif chemokine 4 (Ccl4) from Mus musculus (Mouse).